The sequence spans 469 residues: 3-isopropylmalate dehydratase large subunit (469 aa).

The [4Fe-4S] cluster site is built by C347, C407, and C410.

It belongs to the aconitase/IPM isomerase family. LeuC type 1 subfamily. In terms of assembly, heterodimer of LeuC and LeuD. Requires [4Fe-4S] cluster as cofactor.

It carries out the reaction (2R,3S)-3-isopropylmalate = (2S)-2-isopropylmalate. It functions in the pathway amino-acid biosynthesis; L-leucine biosynthesis; L-leucine from 3-methyl-2-oxobutanoate: step 2/4. Functionally, catalyzes the isomerization between 2-isopropylmalate and 3-isopropylmalate, via the formation of 2-isopropylmaleate. This is 3-isopropylmalate dehydratase large subunit from Prochlorococcus marinus (strain MIT 9515).